The sequence spans 265 residues: Ribosomal RNA large subunit methyltransferase E (265 aa).

Residues Gly-83, Trp-85, Asp-106, Asp-122, and Asp-146 each contribute to the S-adenosyl-L-methionine site. Catalysis depends on Lys-186, which acts as the Proton acceptor. The disordered stretch occupies residues 230–265 (KGREAGPPSGGSERPVDVSKDLSARSDSEGPGDAEG). The segment covering 243–257 (RPVDVSKDLSARSDS) has biased composition (basic and acidic residues).

This sequence belongs to the class I-like SAM-binding methyltransferase superfamily. RNA methyltransferase RlmE family.

It is found in the cytoplasm. It catalyses the reaction uridine(2552) in 23S rRNA + S-adenosyl-L-methionine = 2'-O-methyluridine(2552) in 23S rRNA + S-adenosyl-L-homocysteine + H(+). Specifically methylates the uridine in position 2552 of 23S rRNA at the 2'-O position of the ribose in the fully assembled 50S ribosomal subunit. The polypeptide is Ribosomal RNA large subunit methyltransferase E (Mesorhizobium japonicum (strain LMG 29417 / CECT 9101 / MAFF 303099) (Mesorhizobium loti (strain MAFF 303099))).